The following is a 482-amino-acid chain: Cardiolipin synthase (482 aa).

2 helical membrane passes run 4–24 (LAYL…VTVF) and 34–54 (WAWL…YLIF). PLD phosphodiesterase domains follow at residues 217–244 (LNYR…GDEY) and 395–422 (DNGF…DFRS). Residues histidine 222, lysine 224, aspartate 229, histidine 400, lysine 402, and aspartate 407 contribute to the active site.

This sequence belongs to the phospholipase D family. Cardiolipin synthase subfamily.

It is found in the cell membrane. It carries out the reaction 2 a 1,2-diacyl-sn-glycero-3-phospho-(1'-sn-glycerol) = a cardiolipin + glycerol. Its function is as follows. Catalyzes the reversible phosphatidyl group transfer from one phosphatidylglycerol molecule to another to form cardiolipin (CL) (diphosphatidylglycerol) and glycerol. This chain is Cardiolipin synthase (cls), found in Listeria monocytogenes serotype 4b (strain CLIP80459).